The sequence spans 442 residues: Probable D-serine dehydratase (442 aa).

The residue at position 111 (lysine 111) is an N6-(pyridoxal phosphate)lysine.

Belongs to the serine/threonine dehydratase family. DsdA subfamily. Pyridoxal 5'-phosphate serves as cofactor.

The enzyme catalyses D-serine = pyruvate + NH4(+). The polypeptide is Probable D-serine dehydratase (Sinorhizobium medicae (strain WSM419) (Ensifer medicae)).